The chain runs to 209 residues: Small ribosomal subunit protein uS5 (209 aa).

The 64-residue stretch at L48–I111 folds into the S5 DRBM domain.

This sequence belongs to the universal ribosomal protein uS5 family. In terms of assembly, part of the 30S ribosomal subunit. Contacts protein S4.

Functionally, with S4 and S12 plays an important role in translational accuracy. The protein is Small ribosomal subunit protein uS5 of Methanosarcina mazei (strain ATCC BAA-159 / DSM 3647 / Goe1 / Go1 / JCM 11833 / OCM 88) (Methanosarcina frisia).